The following is a 312-amino-acid chain: MTHPLHIAVLMGGWSSEREVSLTSGNGVADALESLGHKVTRIDMDRDVALRLAEAKPDVVFNALHGTPGEDGTVQGMMDLMGLTYTHSGLTTSVIAIDKELTKQQLVPHGIRMPEGIIVESESLHAGDPMPRPYVLKPVNEGSSVGVAIIKERDNHGVPIHRDSHGPWQTFATLLAEPFIRGRELTVAVLGNRALGVTELVPSSGFYDYEAKYTDGLTTHICPADVPADIAEAAMRMALDAHRLLGCKGTSRSDFRWDDERGEAGLYLLEVNTQPGMTPLSLVPEQARHVGLTYADLVQAIVDEALAGKAAR.

One can recognise an ATP-grasp domain in the interval Lys103 to Asp303. Met130 to Thr186 is a binding site for ATP. 3 residues coordinate Mg(2+): Asp254, Glu270, and Asn272.

Belongs to the D-alanine--D-alanine ligase family. Mg(2+) serves as cofactor. The cofactor is Mn(2+).

Its subcellular location is the cytoplasm. The catalysed reaction is 2 D-alanine + ATP = D-alanyl-D-alanine + ADP + phosphate + H(+). It participates in cell wall biogenesis; peptidoglycan biosynthesis. Functionally, cell wall formation. This chain is D-alanine--D-alanine ligase, found in Rhizorhabdus wittichii (strain DSM 6014 / CCUG 31198 / JCM 15750 / NBRC 105917 / EY 4224 / RW1) (Sphingomonas wittichii).